The chain runs to 214 residues: Nucleoside triphosphate pyrophosphatase (214 aa).

D79 acts as the Proton acceptor in catalysis.

Belongs to the Maf family. Requires a divalent metal cation as cofactor.

It is found in the cytoplasm. The enzyme catalyses a ribonucleoside 5'-triphosphate + H2O = a ribonucleoside 5'-phosphate + diphosphate + H(+). It carries out the reaction a 2'-deoxyribonucleoside 5'-triphosphate + H2O = a 2'-deoxyribonucleoside 5'-phosphate + diphosphate + H(+). Its function is as follows. Nucleoside triphosphate pyrophosphatase. May have a dual role in cell division arrest and in preventing the incorporation of modified nucleotides into cellular nucleic acids. In Rhodococcus opacus (strain B4), this protein is Nucleoside triphosphate pyrophosphatase.